Consider the following 559-residue polypeptide: Putative ankyrin repeat protein RBE_0902 (559 aa).

ANK repeat units lie at residues 11 to 40, 46 to 75, 81 to 110, 158 to 189, 228 to 257, 263 to 292, 298 to 327, 333 to 364, 372 to 402, and 524 to 554; these read DGWT…EQAI, DGNT…DQAI, DGNT…TKQN, DDWT…VINH, NNDT…DQAI, YGNT…EQAI, QCDT…AINC, FGFT…EVII, and IDNN…WGLE.

This Rickettsia bellii (strain RML369-C) protein is Putative ankyrin repeat protein RBE_0902.